The primary structure comprises 554 residues: Hydroxylamine reductase (554 aa).

Residues Cys-3, Cys-6, Cys-18, and Cys-25 each contribute to the [2Fe-2S] cluster site. His-252, Glu-276, Cys-320, Cys-408, Cys-436, Cys-461, Glu-495, and Lys-497 together coordinate hybrid [4Fe-2O-2S] cluster. Cysteine persulfide is present on Cys-408.

The protein belongs to the HCP family. It depends on [2Fe-2S] cluster as a cofactor. Hybrid [4Fe-2O-2S] cluster is required as a cofactor.

The protein localises to the cytoplasm. The catalysed reaction is A + NH4(+) + H2O = hydroxylamine + AH2 + H(+). Its function is as follows. Catalyzes the reduction of hydroxylamine to form NH(3) and H(2)O. The polypeptide is Hydroxylamine reductase (Photobacterium profundum (strain SS9)).